Here is a 374-residue protein sequence, read N- to C-terminus: Zinc finger CCCH domain-containing protein 15 homolog (374 aa).

2 C3H1-type zinc fingers span residues 89-116 (DPKSLLCVFFKQGLCGKGAKCKFSHDLA) and 167-197 (YFLEAVENNKYGWFWECPNGGDKCQYRHCLP).

The protein belongs to the ZC3H15/TMA46 family.

This Caenorhabditis briggsae protein is Zinc finger CCCH domain-containing protein 15 homolog.